Reading from the N-terminus, the 219-residue chain is Nuclear transcription factor Y subunit B-8 (219 aa).

Positions Met-1 to Asp-26 are disordered. The DNA-binding element occupies Leu-29 to Ser-35. The interval Val-56 to Ile-67 is subunit association domain (SAD). Residues Ala-119 to Thr-134 show a composition bias toward low complexity. 2 disordered regions span residues Ala-119–Ala-142 and Gly-166–Ala-219. Residues Gly-190 to Ser-206 are compositionally biased toward gly residues.

The protein belongs to the NFYB/HAP3 subunit family. As to quaternary structure, heterotrimeric transcription factor composed of three components, NF-YA, NF-YB and NF-YC. NF-YB and NF-YC must interact and dimerize for NF-YA association and DNA binding. Interacts with NFYC2, NFYC4 and NFYC6.

The protein localises to the cytoplasm. In terms of biological role, component of the NF-Y/HAP transcription factor complex. In Oryza sativa subsp. japonica (Rice), this protein is Nuclear transcription factor Y subunit B-8.